The following is a 563-amino-acid chain: Arginine--tRNA ligase (563 aa).

The 'HIGH' region motif lies at Pro-122–His-132.

This sequence belongs to the class-I aminoacyl-tRNA synthetase family. As to quaternary structure, monomer.

Its subcellular location is the cytoplasm. It catalyses the reaction tRNA(Arg) + L-arginine + ATP = L-arginyl-tRNA(Arg) + AMP + diphosphate. This Levilactobacillus brevis (strain ATCC 367 / BCRC 12310 / CIP 105137 / JCM 1170 / LMG 11437 / NCIMB 947 / NCTC 947) (Lactobacillus brevis) protein is Arginine--tRNA ligase.